The chain runs to 393 residues: Putative cytochrome P450 143 (393 aa).

Residue cysteine 342 participates in heme binding.

This sequence belongs to the cytochrome P450 family. The cofactor is heme.

In Mycobacterium bovis (strain ATCC BAA-935 / AF2122/97), this protein is Putative cytochrome P450 143 (cyp143).